The sequence spans 358 residues: Peptide chain release factor 1 (358 aa).

At Gln236 the chain carries N5-methylglutamine.

Belongs to the prokaryotic/mitochondrial release factor family. Post-translationally, methylated by PrmC. Methylation increases the termination efficiency of RF1.

Its subcellular location is the cytoplasm. Peptide chain release factor 1 directs the termination of translation in response to the peptide chain termination codons UAG and UAA. The polypeptide is Peptide chain release factor 1 (Corynebacterium efficiens (strain DSM 44549 / YS-314 / AJ 12310 / JCM 11189 / NBRC 100395)).